The sequence spans 619 residues: Translation initiation factor IF-2 (619 aa).

A tr-type G domain is found at 120 to 289 (PRPPIVTIMG…ILLLGEVEGY (170 aa)). Positions 129 to 136 (GHVDHGKT) are G1. 129–136 (GHVDHGKT) provides a ligand contact to GTP. The segment at 154–158 (GITQK) is G2. A G3 region spans residues 176-179 (DTPG). Residues 176–180 (DTPGH) and 230–233 (NKMD) each bind GTP. Residues 230–233 (NKMD) form a G4 region. The tract at residues 266 to 268 (SAL) is G5.

It belongs to the TRAFAC class translation factor GTPase superfamily. Classic translation factor GTPase family. IF-2 subfamily.

It is found in the cytoplasm. One of the essential components for the initiation of protein synthesis. Protects formylmethionyl-tRNA from spontaneous hydrolysis and promotes its binding to the 30S ribosomal subunits. Also involved in the hydrolysis of GTP during the formation of the 70S ribosomal complex. This is Translation initiation factor IF-2 (infB) from Mycoplasma genitalium (strain ATCC 33530 / DSM 19775 / NCTC 10195 / G37) (Mycoplasmoides genitalium).